Reading from the N-terminus, the 986-residue chain is Bifunctional glutamine synthetase adenylyltransferase/adenylyl-removing enzyme (986 aa).

The tract at residues M1 to K475 is adenylyl removase. An adenylyl transferase region spans residues T481–E986.

It belongs to the GlnE family. Mg(2+) is required as a cofactor.

The enzyme catalyses [glutamine synthetase]-O(4)-(5'-adenylyl)-L-tyrosine + phosphate = [glutamine synthetase]-L-tyrosine + ADP. It carries out the reaction [glutamine synthetase]-L-tyrosine + ATP = [glutamine synthetase]-O(4)-(5'-adenylyl)-L-tyrosine + diphosphate. In terms of biological role, involved in the regulation of glutamine synthetase GlnA, a key enzyme in the process to assimilate ammonia. When cellular nitrogen levels are high, the C-terminal adenylyl transferase (AT) inactivates GlnA by covalent transfer of an adenylyl group from ATP to specific tyrosine residue of GlnA, thus reducing its activity. Conversely, when nitrogen levels are low, the N-terminal adenylyl removase (AR) activates GlnA by removing the adenylyl group by phosphorolysis, increasing its activity. The regulatory region of GlnE binds the signal transduction protein PII (GlnB) which indicates the nitrogen status of the cell. The polypeptide is Bifunctional glutamine synthetase adenylyltransferase/adenylyl-removing enzyme (Pasteurella multocida (strain Pm70)).